The following is a 212-amino-acid chain: RNA chaperone ProQ (212 aa).

Residues 114–149 (RIAKAGKTSAPAANAKKPVKKPVARRPKAAPSAKPV) are disordered. Residues 118–129 (AGKTSAPAANAK) are compositionally biased toward low complexity. Positions 130 to 141 (KPVKKPVARRPK) are enriched in basic residues.

The protein belongs to the ProQ family.

It is found in the cytoplasm. In terms of biological role, RNA chaperone with significant RNA binding, RNA strand exchange and RNA duplexing activities. The sequence is that of RNA chaperone ProQ from Shewanella piezotolerans (strain WP3 / JCM 13877).